Reading from the N-terminus, the 85-residue chain is UPF0297 protein CHY_0540 (85 aa).

The protein belongs to the UPF0297 family.

The protein is UPF0297 protein CHY_0540 of Carboxydothermus hydrogenoformans (strain ATCC BAA-161 / DSM 6008 / Z-2901).